Here is a 186-residue protein sequence, read N- to C-terminus: Serine hydrolase RBBP9 (186 aa).

An involved in binding to RB1 region spans residues 63–67 (LHCDE). Residues Ser-75, Asp-138, and His-165 each act as charge relay system in the active site.

This sequence belongs to the RBBP9 family. In terms of assembly, interacts with RB1; the interaction disrupts RB1 binding to E2F1. Interacts with RBL1 and RBL2. In terms of tissue distribution, expressed at higher levels in tumor tissues such as carcinoma.

It catalyses the reaction valacyclovir + H2O = acyclovir + L-valine + H(+). Its activity is regulated as follows. Inhibited by the natural product emetine produced by the ipecac root. Serine hydrolase. Catalyzes the hydrolytic activation of amino acid ester of the antiviral prodrug valacyclovir to its corresponding active drug, acyclovir. May negatively regulate basal or autocrine TGF-beta signaling by suppressing SMAD2-SMAD3 phosphorylation. May play a role in the transformation process due to its capacity to confer resistance to the growth-inhibitory effects of TGF-beta through interaction with RB1 and the subsequent displacement of E2F1. This Homo sapiens (Human) protein is Serine hydrolase RBBP9.